A 386-amino-acid chain; its full sequence is Cytotoxic granule associated RNA binding protein TIA1 (386 aa).

Met1 is modified (N-acetylmethionine). RRM domains follow at residues 7–83, 106–184, and 214–286; these read KTLY…WATT, FHVF…WATR, and CTVY…WGKE. A disordered region spans residues 354 to 386; the sequence is MGPNYGVQPPQGQNGSMLPNQPSGYRVAGYETQ. Residues 363-376 are compositionally biased toward polar residues; it reads PQGQNGSMLPNQPS.

As to quaternary structure, homooligomer; homooligomerization is induced by Zn(2+). Interacts with FASTK; the interactions leads to its phosphorylation. Interacts (via RRM1 and the C-terminal glutamine-rich (Q) sequence) with SNRPC/U1-C (via N-terminus); thereby facilitating spliceosomal U1 snRNP recruitment to 5' splice sites. Phosphorylated by FASTK; phosphorylation occurs after FAS ligation in FAS-mediated apoptosis and before DNA fragmentation. In terms of tissue distribution, expressed in heart, small intestine, kidney, liver, lung, skeletal muscle, testes, pancreas, and ovary (at protein level).

The protein resides in the nucleus. It localises to the cytoplasm. It is found in the stress granule. Functionally, RNA-binding protein involved in the regulation of alternative pre-RNA splicing and mRNA translation by binding to uridine-rich (U-rich) RNA sequences. Binds to U-rich sequences immediately downstream from a 5' splice sites in a uridine-rich small nuclear ribonucleoprotein (U snRNP)-dependent fashion, thereby modulating alternative pre-RNA splicing. Preferably binds to the U-rich IAS1 sequence in a U1 snRNP-dependent manner; this binding is optimal if a 5' splice site is adjacent to IAS1. Activates the use of heterologous 5' splice sites; the activation depends on the intron sequence downstream from the 5' splice site, with a preference for a downstream U-rich sequence. By interacting with SNRPC/U1-C, promotes recruitment and binding of spliceosomal U1 snRNP to 5' splice sites followed by U-rich sequences, thereby facilitating atypical 5' splice site recognition by U1 snRNP. Activates splicing of alternative exons with weak 5' splice sites followed by a U-rich stretch on its own pre-mRNA and on TIAR mRNA. Acts as a modulator of alternative splicing for the apoptotic FAS receptor, thereby promoting apoptosis. Binds to the 5' splice site region of FAS intron 5 to promote accumulation of transcripts that include exon 6 at the expense of transcripts in which exon 6 is skipped, thereby leading to the transcription of a membrane-bound apoptotic FAS receptor, which promotes apoptosis. Binds to a conserved AU-rich cis element in COL2A1 intron 2 and modulates alternative splicing of COL2A1 exon 2. Also binds to the equivalent AT-rich element in COL2A1 genomic DNA, and may thereby be involved in the regulation of transcription. Binds specifically to a polypyrimidine-rich controlling element (PCE) located between the weak 5' splice site and the intronic splicing silencer of CFTR mRNA to promote exon 9 inclusion, thereby antagonizing PTB1 and its role in exon skipping of CFTR exon 9. Involved in the repression of mRNA translation by binding to AU-rich elements (AREs) located in mRNA 3' untranslated regions (3' UTRs), including target ARE-bearing mRNAs encoding TNF and PTGS2. Also participates in the cellular response to environmental stress, by acting downstream of the stress-induced phosphorylation of EIF2S1/EIF2A to promote the recruitment of untranslated mRNAs to cytoplasmic stress granules (SGs), leading to stress-induced translational arrest. Formation and recruitment to SGs is regulated by Zn(2+). Possesses nucleolytic activity against cytotoxic lymphocyte target cells. Its function is as follows. Displays enhanced splicing regulatory activity compared with TIA isoform Long. This Homo sapiens (Human) protein is Cytotoxic granule associated RNA binding protein TIA1 (TIA1).